The primary structure comprises 122 residues: Protein TCL1B3 (122 aa).

Belongs to the TCL1 family.

This is Protein TCL1B3 (Tcl1b3) from Mus musculus (Mouse).